The sequence spans 153 residues: NAD(P)H-quinone oxidoreductase subunit N (153 aa).

This sequence belongs to the complex I NdhN subunit family. In terms of assembly, NDH-1 can be composed of about 15 different subunits; different subcomplexes with different compositions have been identified which probably have different functions.

It localises to the cellular thylakoid membrane. It carries out the reaction a plastoquinone + NADH + (n+1) H(+)(in) = a plastoquinol + NAD(+) + n H(+)(out). The catalysed reaction is a plastoquinone + NADPH + (n+1) H(+)(in) = a plastoquinol + NADP(+) + n H(+)(out). Functionally, NDH-1 shuttles electrons from an unknown electron donor, via FMN and iron-sulfur (Fe-S) centers, to quinones in the respiratory and/or the photosynthetic chain. The immediate electron acceptor for the enzyme in this species is believed to be plastoquinone. Couples the redox reaction to proton translocation, and thus conserves the redox energy in a proton gradient. Cyanobacterial NDH-1 also plays a role in inorganic carbon-concentration. The chain is NAD(P)H-quinone oxidoreductase subunit N from Synechococcus sp. (strain CC9311).